An 89-amino-acid polypeptide reads, in one-letter code: Probable Fe(2+)-trafficking protein (89 aa).

It belongs to the Fe(2+)-trafficking protein family.

In terms of biological role, could be a mediator in iron transactions between iron acquisition and iron-requiring processes, such as synthesis and/or repair of Fe-S clusters in biosynthetic enzymes. This is Probable Fe(2+)-trafficking protein from Stenotrophomonas maltophilia (strain K279a).